Consider the following 237-residue polypeptide: Ribose-5-phosphate isomerase A (237 aa).

Substrate contacts are provided by residues 30 to 33 (SGST), 87 to 90 (DGAD), and 100 to 103 (KGGG). E109 (proton acceptor) is an active-site residue. Residue K127 participates in substrate binding.

Belongs to the ribose 5-phosphate isomerase family. As to quaternary structure, homodimer.

The catalysed reaction is aldehydo-D-ribose 5-phosphate = D-ribulose 5-phosphate. The protein operates within carbohydrate degradation; pentose phosphate pathway; D-ribose 5-phosphate from D-ribulose 5-phosphate (non-oxidative stage): step 1/1. In terms of biological role, catalyzes the reversible conversion of ribose-5-phosphate to ribulose 5-phosphate. The sequence is that of Ribose-5-phosphate isomerase A from Synechococcus sp. (strain RCC307).